A 196-amino-acid chain; its full sequence is Probable cobalt-precorrin-6B C(15)-methyltransferase (decarboxylating) (196 aa).

Residues Thr24, 48 to 52 (GCGTG), Asp72, and Ala101 each bind S-adenosyl-L-methionine.

The protein belongs to the methyltransferase superfamily. Archaeal-type CbiT family.

It catalyses the reaction Co-precorrin-6B + S-adenosyl-L-methionine = Co-precorrin-7 + S-adenosyl-L-homocysteine + CO2. It participates in cofactor biosynthesis; adenosylcobalamin biosynthesis; cob(II)yrinate a,c-diamide from sirohydrochlorin (anaerobic route): step 8/10. Its function is as follows. Catalyzes the methylation of C-15 in cobalt-precorrin-6B followed by the decarboxylation of C-12 to form cobalt-precorrin-7. The polypeptide is Probable cobalt-precorrin-6B C(15)-methyltransferase (decarboxylating) (Pyrobaculum aerophilum (strain ATCC 51768 / DSM 7523 / JCM 9630 / CIP 104966 / NBRC 100827 / IM2)).